A 794-amino-acid polypeptide reads, in one-letter code: Protein IQ-DOMAIN 32 (794 aa).

The segment at 15 to 101 is disordered; the sequence is CSGGDDTSAD…QSFSVDEKKS (87 aa). Composition is skewed to polar residues over residues 23–33 and 56–65; these read ADPNSTALENK and SVVSETTPAS. Phosphoserine occurs at positions 78, 80, 142, 193, and 195. The segment covering 80 to 95 has biased composition (polar residues); it reads SPDNNNVSEKQQQSFS. IQ domains are found at residues 214 to 242 and 243 to 265; these read DESV…KVIK and LQAA…CVQA. The tract at residues 230-241 is calmodulin-binding; it reads ARRELLRSKKVI. The disordered stretch occupies residues 277 to 296; sequence HSTKDGSRVSATSDKSEPNA. S369 carries the phosphoserine modification. The tract at residues 375 to 417 is disordered; that stretch reads VNSDSTVENKTETDMPSYEASKVEGQNVELSETEKMSQYDSPE. At S459 the chain carries Phosphoserine. Disordered regions lie at residues 472 to 555 and 578 to 794; these read ELTS…RVEA and ATSM…KWQR. A compositionally biased stretch (polar residues) spans 473 to 486; that stretch reads LTSSTGSNKAMTLS. Residues 487–500 show a composition bias toward basic and acidic residues; the sequence is SKDDVLGEEGKTDI. 2 positions are modified to phosphoserine: S502 and S544. 2 stretches are compositionally biased toward basic and acidic residues: residues 539 to 555 and 585 to 607; these read TLEK…RVEA and EDPK…HHEP. Positions 643–654 are enriched in low complexity; sequence SQATPASQASSS. The short motif at 657 to 664 is the Nuclear localization signal element; it reads ARKGKSEK. The segment covering 768-786 has biased composition (polar residues); the sequence is NGKQVSPRIQRSASQAQQG.

The protein belongs to the IQD family. As to quaternary structure, binds to multiple calmodulin (CaM) in the presence of Ca(2+) and CaM-like proteins.

It localises to the nucleus. It is found in the cytoplasm. Its subcellular location is the cytoskeleton. May be involved in cooperative interactions with calmodulins or calmodulin-like proteins. Recruits calmodulin proteins to microtubules, thus being a potential scaffold in cellular signaling and trafficking. May associate with nucleic acids and regulate gene expression at the transcriptional or post-transcriptional level. In Arabidopsis thaliana (Mouse-ear cress), this protein is Protein IQ-DOMAIN 32.